Consider the following 102-residue polypeptide: Large ribosomal subunit protein bL21 (102 aa).

Belongs to the bacterial ribosomal protein bL21 family. Part of the 50S ribosomal subunit. Contacts protein L20.

In terms of biological role, this protein binds to 23S rRNA in the presence of protein L20. The chain is Large ribosomal subunit protein bL21 from Marinomonas sp. (strain MWYL1).